A 461-amino-acid polypeptide reads, in one-letter code: L-seryl-tRNA(Sec) selenium transferase (461 aa).

Lys294 carries the post-translational modification N6-(pyridoxal phosphate)lysine.

This sequence belongs to the SelA family. It depends on pyridoxal 5'-phosphate as a cofactor.

Its subcellular location is the cytoplasm. The enzyme catalyses L-seryl-tRNA(Sec) + selenophosphate + H(+) = L-selenocysteinyl-tRNA(Sec) + phosphate. The protein operates within aminoacyl-tRNA biosynthesis; selenocysteinyl-tRNA(Sec) biosynthesis; selenocysteinyl-tRNA(Sec) from L-seryl-tRNA(Sec) (bacterial route): step 1/1. Its function is as follows. Converts seryl-tRNA(Sec) to selenocysteinyl-tRNA(Sec) required for selenoprotein biosynthesis. The protein is L-seryl-tRNA(Sec) selenium transferase of Actinobacillus pleuropneumoniae serotype 7 (strain AP76).